We begin with the raw amino-acid sequence, 395 residues long: Acid ceramidase (395 aa).

Positions 1–21 (MLGRSRLTFVLLSVTVTCSVA) are cleaved as a signal peptide. The cysteines at positions 31 and 340 are disulfide-linked. Cysteine 143 acts as the Nucleophile in catalysis. Residues asparagine 173, asparagine 259, asparagine 342, and asparagine 348 are each glycosylated (N-linked (GlcNAc...) asparagine). Cysteine 388 and cysteine 392 form a disulfide bridge.

This sequence belongs to the acid ceramidase family. Heterodimer; disulfide-linked. The heterodimer is composed of the disulfide-linked alpha and beta chains produced by autocatalytic cleavage of the precursor. N-glycosylated. Post-translationally, proteolytically cleaved into two chains alpha and beta that remain associated via a disulfide bond. Cleavage gives rise to a conformation change that activates the enzyme. The same catalytic Cys residue mediates the autoproteolytic cleavage and subsequent hydrolysis of lipid substrates. The beta chain may undergo an additional C-terminal processing.

The protein resides in the lysosome. The protein localises to the secreted. It catalyses the reaction an N-acylsphing-4-enine + H2O = sphing-4-enine + a fatty acid. The catalysed reaction is N-dodecanoylsphing-4-enine + H2O = dodecanoate + sphing-4-enine. It carries out the reaction N-tetradecanoylsphing-4-enine + H2O = tetradecanoate + sphing-4-enine. The enzyme catalyses N-hexadecanoylsphing-4-enine + H2O = sphing-4-enine + hexadecanoate. It catalyses the reaction N-octadecanoylsphing-4-enine + H2O = sphing-4-enine + octadecanoate. The catalysed reaction is N-dodecanoyl-(4R)-hydroxysphinganine + H2O = (4R)-hydroxysphinganine + dodecanoate. It carries out the reaction N-(dodecanoyl)-sphinganine + H2O = dodecanoate + sphinganine. The enzyme catalyses N-(acetyl)-sphing-4-enine + H2O = sphing-4-enine + acetate. It catalyses the reaction N-(hexanoyl)sphing-4-enine + H2O = hexanoate + sphing-4-enine. The catalysed reaction is N-octanoylsphing-4-enine + H2O = octanoate + sphing-4-enine. It carries out the reaction N-(9Z-octadecenoyl)-sphing-4-enine + H2O = sphing-4-enine + (9Z)-octadecenoate. The enzyme catalyses N-dodecanoylethanolamine + H2O = dodecanoate + ethanolamine. It functions in the pathway lipid metabolism; sphingolipid metabolism. Lysosomal ceramidase that hydrolyzes sphingolipid ceramides into sphingosine and free fatty acids at acidic pH. Ceramides, sphingosine, and its phosphorylated form sphingosine-1-phosphate are bioactive lipids that mediate cellular signaling pathways regulating several biological processes including cell proliferation, apoptosis and differentiation. Has a higher catalytic efficiency towards C12-ceramides versus other ceramides. Also catalyzes the reverse reaction allowing the synthesis of ceramides from fatty acids and sphingosine. For the reverse synthetic reaction, the natural sphingosine D-erythro isomer is more efficiently utilized as a substrate compared to D-erythro-dihydrosphingosine and D-erythro-phytosphingosine, while the fatty acids with chain lengths of 12 or 14 carbons are the most efficiently used. Also has an N-acylethanolamine hydrolase activity. By regulating the levels of ceramides, sphingosine and sphingosine-1-phosphate in the epidermis, mediates the calcium-induced differentiation of epidermal keratinocytes. Also indirectly regulates tumor necrosis factor/TNF-induced apoptosis. By regulating the intracellular balance between ceramides and sphingosine, in adrenocortical cells, probably also acts as a regulator of steroidogenesis. The chain is Acid ceramidase from Balaenoptera acutorostrata scammoni (North Pacific minke whale).